The following is a 102-amino-acid chain: Large ribosomal subunit protein bL21 (102 aa).

It belongs to the bacterial ribosomal protein bL21 family. Part of the 50S ribosomal subunit. Contacts protein L20.

Functionally, this protein binds to 23S rRNA in the presence of protein L20. This Sulfurimonas denitrificans (strain ATCC 33889 / DSM 1251) (Thiomicrospira denitrificans (strain ATCC 33889 / DSM 1251)) protein is Large ribosomal subunit protein bL21.